The sequence spans 302 residues: Glutaminase (302 aa).

Substrate contacts are provided by Ser-61, Asn-111, Glu-155, Asn-162, Tyr-186, Tyr-238, and Val-256.

Belongs to the glutaminase family. Homotetramer.

The enzyme catalyses L-glutamine + H2O = L-glutamate + NH4(+). The sequence is that of Glutaminase from Ectopseudomonas mendocina (strain ymp) (Pseudomonas mendocina).